A 336-amino-acid chain; its full sequence is NAC domain-containing protein 100 (336 aa).

Residues 16 to 166 (LPPGFRFHPT…EWVICRVFQK (151 aa)) enclose the NAC domain. The DNA-binding element occupies 113 to 172 (VGMKKTLVFYRGRAPKGQKTNWVMHEYRLEGKFSAHNLPKTAKNEWVICRVFQKSAGGKK). The interval 313–336 (RRFDSQEDPSSSTGPVDLEPFWNY) is disordered.

It is found in the nucleus. Its function is as follows. Binds to the promoter regions of genes involved in chlorophyll catabolic processes, such as NYC1, SGR1, SGR2 and PAO. The sequence is that of NAC domain-containing protein 100 from Arabidopsis thaliana (Mouse-ear cress).